We begin with the raw amino-acid sequence, 254 residues long: 4-hydroxy-tetrahydrodipicolinate reductase (254 aa).

NAD(+) is bound at residue Gly-7–Ile-12. Arg-35 serves as a coordination point for NADP(+). Residues Gly-91–Thr-93 and Ala-115–Met-118 contribute to the NAD(+) site. His-147 functions as the Proton donor/acceptor in the catalytic mechanism. (S)-2,3,4,5-tetrahydrodipicolinate is bound at residue His-148. Lys-151 serves as the catalytic Proton donor. Residue Gly-157–Thr-158 coordinates (S)-2,3,4,5-tetrahydrodipicolinate.

This sequence belongs to the DapB family.

It is found in the cytoplasm. It carries out the reaction (S)-2,3,4,5-tetrahydrodipicolinate + NAD(+) + H2O = (2S,4S)-4-hydroxy-2,3,4,5-tetrahydrodipicolinate + NADH + H(+). The enzyme catalyses (S)-2,3,4,5-tetrahydrodipicolinate + NADP(+) + H2O = (2S,4S)-4-hydroxy-2,3,4,5-tetrahydrodipicolinate + NADPH + H(+). Its pathway is amino-acid biosynthesis; L-lysine biosynthesis via DAP pathway; (S)-tetrahydrodipicolinate from L-aspartate: step 4/4. Functionally, catalyzes the conversion of 4-hydroxy-tetrahydrodipicolinate (HTPA) to tetrahydrodipicolinate. The protein is 4-hydroxy-tetrahydrodipicolinate reductase of Helicobacter pylori (strain Shi470).